Consider the following 111-residue polypeptide: High mobility group protein Z (111 aa).

Positions Pro6 to Glu72 form a DNA-binding region, HMG box. Ser11 is modified (phosphoserine). The interval Glu72–Glu111 is disordered. Positions Pro82–Lys98 are enriched in basic residues. The segment covering Ser102–Glu111 has biased composition (acidic residues).

It belongs to the HMGB family.

The protein localises to the nucleus. It localises to the chromosome. The chain is High mobility group protein Z (HmgZ) from Drosophila melanogaster (Fruit fly).